We begin with the raw amino-acid sequence, 304 residues long: Acetylglutamate kinase (304 aa).

Residues 77-78 (GG), arginine 99, and asparagine 193 each bind substrate.

The protein belongs to the acetylglutamate kinase family. ArgB subfamily.

It localises to the cytoplasm. The enzyme catalyses N-acetyl-L-glutamate + ATP = N-acetyl-L-glutamyl 5-phosphate + ADP. Its pathway is amino-acid biosynthesis; L-arginine biosynthesis; N(2)-acetyl-L-ornithine from L-glutamate: step 2/4. Catalyzes the ATP-dependent phosphorylation of N-acetyl-L-glutamate. This is Acetylglutamate kinase from Pelodictyon phaeoclathratiforme (strain DSM 5477 / BU-1).